Here is a 140-residue protein sequence, read N- to C-terminus: Putative nickel-responsive regulator 3 (140 aa).

4 residues coordinate Ni(2+): His81, His92, His94, and Cys100.

It belongs to the transcriptional regulatory CopG/NikR family. Ni(2+) serves as cofactor.

Its function is as follows. Transcriptional regulator. This is Putative nickel-responsive regulator 3 from Methanosarcina acetivorans (strain ATCC 35395 / DSM 2834 / JCM 12185 / C2A).